Here is a 208-residue protein sequence, read N- to C-terminus: FAS-associated death domain protein (208 aa).

Residues 3 to 81 (PFLVLLHSVS…RHDLLRRVDD (79 aa)) form the DED domain. The 85-residue stretch at 97-181 (LCAAFNVICD…LVADLVQEVQ (85 aa)) folds into the Death domain. Arginine 117 carries a (Microbial infection) N-beta-linked (GlcNAc) arginine glycan. A disordered region spans residues 187 to 208 (QNRSGAMSPMSWNSDASTSEAS). Serine 194 carries the phosphoserine modification.

Can self-associate. Component of the AIM2 PANoptosome complex, a multiprotein complex that drives inflammatory cell death (PANoptosis). Component of the death-induced signaling complex (DISC) composed of cell surface receptor FAS/CD95 or TNFRSF1A, adapter protein FADD and the CASP8 protease; recruitment of CASP8 to the complex is required for processing of CASP8 into the p18 and p10 subunits. Interacts (via death domain) with FAS (via death domain). Interacts directly (via DED domain) with NOL3 (via CARD domain); inhibits death-inducing signaling complex (DISC) assembly by inhibiting the increase in FAS-FADD binding induced by FAS activation. Interacts with CFLAR, PEA15 and MBD4. When phosphorylated, part of a complex containing HIPK3 and FAS. May interact with MAVS/IPS1. Interacts with MOCV v-CFLAR protein and PIDD1. Interacts with RIPK1 and TRADD. Interacts with stimulated TNFRSF10B. Interacts with DDX24. As to quaternary structure, (Microbial infection) Interacts with human papillomavirus 16/HPV16 protein E6. In terms of assembly, (Microbial infection) Interacts with molluscum contagiosum virus proteins MC159L/v-CFLAR and MC160L. (Microbial infection) Glycosylated at Arg-117 by enteropathogenic E.coli protein NleB1, C.rodentium protein NleB and S.typhimurium protein Ssek1: arginine GlcNAcylation prevents recruitment of caspase-8 or caspase-10 to the activated Fas (CD95) or TNFR-1 receptors. As to expression, expressed in a wide variety of tissues, except for peripheral blood mononuclear leukocytes.

The protein localises to the cytoplasm. Functionally, apoptotic adapter molecule that recruits caspases CASP8 or CASP10 to the activated FAS/CD95 or TNFRSF1A/TNFR-1 receptors. The resulting aggregate called the death-inducing signaling complex (DISC) performs CASP8 proteolytic activation. Active CASP8 initiates the subsequent cascade of caspases mediating apoptosis. Involved in interferon-mediated antiviral immune response, playing a role in the positive regulation of interferon signaling. In Homo sapiens (Human), this protein is FAS-associated death domain protein.